An 84-amino-acid polypeptide reads, in one-letter code: RQC P-site tRNA stabilizing factor (84 aa).

An S4 RNA-binding domain is found at 1–64; it reads MRIDKFLQSV…IEEYTILQIP (64 aa).

This sequence belongs to the RqcP family. In terms of assembly, associates with stalled 50S ribosomal subunits. Binds to RqcH, 23S rRNA and the P-site tRNA. Does not require RqcH for association with 50S subunits.

In terms of biological role, key component of the ribosome quality control system (RQC), a ribosome-associated complex that mediates the extraction of incompletely synthesized nascent chains from stalled ribosomes and their subsequent degradation. RqcH recruits Ala-charged tRNA, and with RqcP directs the elongation of stalled nascent chains on 50S ribosomal subunits, leading to non-templated C-terminal alanine extensions (Ala tail). The Ala tail promotes nascent chain degradation. RqcP is associated with the translocation-like movement of the peptidyl-tRNA from the A-site into the P-site. This chain is RQC P-site tRNA stabilizing factor, found in Helicobacter pylori (strain ATCC 700392 / 26695) (Campylobacter pylori).